A 301-amino-acid polypeptide reads, in one-letter code: Glycine--tRNA ligase alpha subunit (301 aa).

The protein belongs to the class-II aminoacyl-tRNA synthetase family. As to quaternary structure, tetramer of two alpha and two beta subunits.

The protein localises to the cytoplasm. The enzyme catalyses tRNA(Gly) + glycine + ATP = glycyl-tRNA(Gly) + AMP + diphosphate. This chain is Glycine--tRNA ligase alpha subunit, found in Shewanella halifaxensis (strain HAW-EB4).